The primary structure comprises 47 residues: Mu-theraphotoxin-An1a (47 aa).

Cystine bridges form between Cys-4–Cys-34, Cys-8–Cys-39, and Cys-22–Cys-44.

Contains 3 disulfide bonds. Expressed by the venom gland.

The protein resides in the secreted. In terms of biological role, is toxic to insects. Reduces amplitude and frequency of spontaneous firing and inhibits voltage-gated sodium current (Nav) in the dorsal unpaired median (DUM) neurons of P.americana. In Acanthoscurria natalensis (Tarantula spider), this protein is Mu-theraphotoxin-An1a.